The primary structure comprises 47 residues: uncharacterized protein (47 aa).

Residues 24–47 form a disordered region; that stretch reads FGPNPIEPPTDIAPDPDSTKTWLI.

This is an uncharacterized protein from Mycobacterium tuberculosis (strain ATCC 25618 / H37Rv).